Reading from the N-terminus, the 1056-residue chain is Pleckstrin homology domain-containing family M member 1 (1056 aa).

In terms of domain architecture, RUN spans 41–183 (TSEDGDANTM…LSFELSYKSA (143 aa)). Disordered stretches follow at residues 215 to 245 (QRKE…RRNQ), 277 to 303 (GSKS…EDSD), and 360 to 422 (PAQA…QAHD). The residue at position 219 (serine 219) is a Phosphoserine. The span at 389–404 (PVESTSGQQPSSTVSE) shows a compositional bias: polar residues. Phosphoserine occurs at positions 432 and 435. The segment at 451–483 (SREQPLESASDHPIASYRGTPGSRPGLHRHFSQ) is disordered. Serine 490 is subject to Phosphoserine. Residues 534–625 (GLMKLGTVER…WLDRVREALQ (92 aa)) form the PH 1 domain. Positions 632–638 (EDEWVNV) match the LIR motif. The interval 654-1056 (CLSPSDLLSE…RKYQEQNIFA (403 aa)) is interaction with RAB7A. Residues 683 to 777 (DAIKESLLYL…WRDLVRKVLA (95 aa)) enclose the PH 2 domain. The Phorbol-ester/DAG-type zinc-finger motif lies at 986–1040 (QHVYHCDLCTQRGFICQICQHHDIIFPFEFDTTVRCAECKTVFHQSCQAVVKKGC).

As to quaternary structure, interacts (via N- and C-terminus) with RAB7A (GTP-bound form). Simultaneously interacts with RAB7A and ARL8B; bringing about clustering and fusion of late endosomes and lysosomes. Interacts (via RUN domain) with ARL8B (GTP-bound form); the interaction is required for PLEKHM1 localization to lysosomes and for ARL8B function in delivery and degradation of endocytic and autophagic cargo in lysosomes. PLEKHM1 and PLEKHM2 compete for interaction with ARL8B. Interacts with ARL8A; the interaction is weaker than with ARL8B. Interacts with VPS41, VPS11, VPS18, VPS33A and VPS39; indicative for an association with the HOPS complex; the interactions with, at least, VPS41, VPS11, VPS18 and VPS33A require ARL8B. Interacts with GABARAP, GABARAPL, GABARAPL2, MAP1LC3A, MAP1LC3B and MAP1LC3C. Interacts with PAFAH1B. Interacts (via N- and C-terminus) with NDEL1. Interacts (via C-terminus) with MAP3K7. Interacts (via N- and C-terminus) with FAM98A. Interacts (via C-terminus) with DEF8; this interaction is weak but increased in a RAB7A-dependent manner. In colon carcinoma and breast carcinoma cells, it interacts with sialyl-lex-positive protein. (Microbial infection) Interacts with Salmonella typhimurium sifA. Expressed in placenta, liver, prostate, thymus, spleen, ovary, colon, colon carcinoma and peripheral blood lymphocytes (PBL). Weakly expressed in brain, lung, kidney, and testis. No expression in heart, skeletal muscle, pancreas and small intestine. Predominantly expressed in the breast carcinoma cell line MCF-7.

The protein resides in the autolysosome membrane. It is found in the endosome membrane. It localises to the late endosome membrane. Its subcellular location is the lysosome membrane. In terms of biological role, acts as a multivalent adapter protein that regulates Rab7-dependent and HOPS complex-dependent fusion events in the endolysosomal system and couples autophagic and the endocytic trafficking pathways. Acts as a dual effector of RAB7A and ARL8B that simultaneously binds these GTPases, bringing about clustering and fusion of late endosomes and lysosomes. Required for late stages of endolysosomal maturation, facilitating both endocytosis-mediated degradation of growth factor receptors and autophagosome clearance. Interaction with Arl8b is a crucial factor in the terminal maturation of autophagosomes and to mediate autophagosome-lysosome fusion. Positively regulates lysosome peripheral distribution and ruffled border formation in osteoclasts. May be involved in negative regulation of endocytic transport from early endosome to late endosome/lysosome implicating its association with Rab7. May have a role in sialyl-lex-mediated transduction of apoptotic signals. Involved in bone resorption. Functionally, (Microbial infection) In case of infection contributes to Salmonella typhimurium pathogenesis by supporting the integrity of the Salmonella-containing vacuole (SCV) probably in concert with the HOPS complex and Rab7. This chain is Pleckstrin homology domain-containing family M member 1, found in Homo sapiens (Human).